A 167-amino-acid polypeptide reads, in one-letter code: Urease accessory protein UreE (167 aa).

The interval 137-158 (EAGAYQSAPHGHSHSHAHGHDH) is disordered.

It belongs to the UreE family.

It is found in the cytoplasm. Functionally, involved in urease metallocenter assembly. Binds nickel. Probably functions as a nickel donor during metallocenter assembly. This Pseudomonas putida (strain ATCC 700007 / DSM 6899 / JCM 31910 / BCRC 17059 / LMG 24140 / F1) protein is Urease accessory protein UreE.